Consider the following 126-residue polypeptide: Glycine cleavage system H protein (126 aa).

Residues 24–105 (TLTVGITDHA…AYGVWLFKIK (82 aa)) enclose the Lipoyl-binding domain. Lys65 carries the N6-lipoyllysine modification.

Belongs to the GcvH family. In terms of assembly, the glycine cleavage system is composed of four proteins: P, T, L and H. Requires (R)-lipoate as cofactor.

The glycine cleavage system catalyzes the degradation of glycine. The H protein shuttles the methylamine group of glycine from the P protein to the T protein. The polypeptide is Glycine cleavage system H protein (Burkholderia ambifaria (strain MC40-6)).